Reading from the N-terminus, the 913-residue chain is Cadherin-4 (913 aa).

The N-terminal stretch at 1 to 20 is a signal peptide; it reads MTTGSVLPLLLLGLSGALRA. Positions 21-166 are excised as a propeptide; that stretch reads HREDLTVREA…SSGGLRRQKR (146 aa). The N-linked (GlcNAc...) asparagine glycan is linked to Asn-146. Cadherin domains follow at residues 167-274, 275-389, 390-504, 505-610, and 611-721; these read DWVI…RPEF, INQV…PPEF, TTST…APYF, PSNH…DNAP, and QLLP…TVGA. At 167–731 the chain is on the extracellular side; it reads DWVIPPINVP…VAAAGLGTGA (565 aa). Asn-280, Asn-409, Asn-554, Asn-629, Asn-658, and Asn-699 each carry an N-linked (GlcNAc...) asparagine glycan. Residues 732 to 753 form a helical membrane-spanning segment; the sequence is IVAILICIVILLIMVLLFVVWM. Over 754–913 the chain is Cytoplasmic; that stretch reads KRREKERHTK…ADMYGGGEED (160 aa).

Distributed widely in mouse tissues with high levels present in brain, skeletal muscle and thymus.

It is found in the cell membrane. Cadherins are calcium-dependent cell adhesion proteins. They preferentially interact with themselves in a homophilic manner in connecting cells; cadherins may thus contribute to the sorting of heterogeneous cell types. May play an important role in retinal development. The chain is Cadherin-4 (Cdh4) from Mus musculus (Mouse).